We begin with the raw amino-acid sequence, 126 residues long: KH homology domain-containing protein 1B (126 aa).

The 60-residue stretch at 19–78 (PLVFDMEEDQEDYIFGPDDEYLHTLEVHSNTLIQLERWFSPTGQTRVTVVGPLKARLWVM) folds into the KH domain.

This sequence belongs to the KHDC1 family.

This Mus musculus (Mouse) protein is KH homology domain-containing protein 1B (Khdc1b).